A 405-amino-acid chain; its full sequence is Scarecrow-like protein 23 (405 aa).

The segment at 1 to 20 (MTTKRIDRDLPSSDDPSSAK) is disordered. A GRAS domain is found at 31 to 400 (ENDGAAAIKL…LSLLTASAWK (370 aa)). The segment at 38 to 102 (IKLLSLLLQC…ISSYLSGACS (65 aa)) is leucine repeat I (LRI). Positions 45 to 49 (LQCAE) match the LxCxE motif motif. Residues 121 to 186 (LQTYNSVSPL…RKLRSIRITG (66 aa)) form a VHIID region. The short motif at 152-156 (VHIID) is the VHIID element. The interval 196-228 (STGRRLADFASSLNLPFEFHPIEGIIGNLIDPS) is leucine repeat II (LRII). The interval 238 to 327 (VVVHWMQHRL…QIVLGTEIRN (90 aa)) is PFYRE. Residues 330 to 400 (AHGGGRRKRM…LSLLTASAWK (71 aa)) form an SAW region.

The protein belongs to the GRAS family. Interacts with SHR. Expressed in seedlings, cotyledons, shoot apex, leaves and flowers.

It is found in the nucleus. Functionally, probable transcription factor involved in plant development. The protein is Scarecrow-like protein 23 (SCL23) of Arabidopsis thaliana (Mouse-ear cress).